The following is a 354-amino-acid chain: Cysteine and histidine-rich domain-containing protein morgana (354 aa).

Zn(2+) is bound by residues cysteine 4, cysteine 9, cysteine 23, histidine 26, cysteine 41, cysteine 42, cysteine 58, histidine 63, cysteine 140, cysteine 145, cysteine 159, histidine 162, cysteine 177, cysteine 178, cysteine 194, and histidine 199. 2 CHORD domains span residues 4 to 63 (CYNR…LAKH) and 140 to 199 (CKNN…YGEH). Residues 210 to 301 (VVQCRYDWHQ…LEPGSWSNLN (92 aa)) form the CS domain. Residues serine 324 and serine 339 each carry the phosphoserine modification.

In terms of assembly, interacts with Hsp83.

Its subcellular location is the cytoplasm. The protein localises to the nucleus. It localises to the cytoskeleton. The protein resides in the spindle. In terms of biological role, regulates centrosome duplication and mitotic spindle dynamics. Also involved in controlling the size of dendritic arbors. May act as co-chaperone for Hsp83. During mitotic spindle assembly, regulates microtubule (MT) dynamics by binding to MTs and promoting MT polymerisation. Promotes the elongation and retraction of terminal branches in response to changes in body size, possibly acting downstream of the TORC2 pathway to enable proportional scaling of dendritic arbors. The chain is Cysteine and histidine-rich domain-containing protein morgana from Drosophila melanogaster (Fruit fly).